A 257-amino-acid chain; its full sequence is ECF RNA polymerase sigma factor SigE (257 aa).

The segment at 87–153 (MPSWDELVRQ…RITTNLFLDM (67 aa)) is sigma-70 factor domain-2. Residues 111–114 (NQHD) carry the Polymerase core binding motif. A sigma-70 factor domain-4 region spans residues 186 to 236 (SRLGADLQAALDSLPPEFRAAVVLCDIEGLSYEEIGATLGVKLGTVRSRIH). Residues 211–230 (DIEGLSYEEIGATLGVKLGT) constitute a DNA-binding region (H-T-H motif).

This sequence belongs to the sigma-70 factor family. ECF subfamily. As to quaternary structure, interacts transiently with the RNA polymerase catalytic core formed by RpoA, RpoB, RpoC and RpoZ (2 alpha, 1 beta, 1 beta' and 1 omega subunit) to form the RNA polymerase holoenzyme that can initiate transcription. Interacts (via sigma-70 factor domain 4) with RseA; interaction is abrogated by treatment of cells with H(2)O(2) or detergent.

In terms of biological role, sigma factors are initiation factors that promote the attachment of RNA polymerase to specific initiation sites and are then released. Extracytoplasmic function (ECF) sigma factors are held in an inactive form by an anti-sigma factor until released. This chain is ECF RNA polymerase sigma factor SigE (sigE), found in Mycolicibacterium smegmatis (strain ATCC 700084 / mc(2)155) (Mycobacterium smegmatis).